The chain runs to 261 residues: UPF0177 protein YvdC (261 aa).

The next 6 helical transmembrane spans lie at 15-35 (WVIV…IFHL), 43-63 (VLSI…VLFI), 84-104 (LDTV…YLIA), 123-143 (IIIG…FAQI), 197-217 (YFAF…TDLY), and 239-259 (FYLN…IALV).

Belongs to the UPF0177 family.

The protein resides in the cell membrane. This chain is UPF0177 protein YvdC (yvdC), found in Lactococcus lactis subsp. lactis (strain IL1403) (Streptococcus lactis).